Consider the following 391-residue polypeptide: Phosphoglycerate kinase (391 aa).

Substrate is bound by residues 21 to 23, Arg-36, 59 to 62, Arg-113, and Arg-146; these read DLN and HLGR. Residues Lys-197, Glu-319, and 345–348 contribute to the ATP site; that span reads GGDT.

This sequence belongs to the phosphoglycerate kinase family. In terms of assembly, monomer.

It localises to the cytoplasm. The enzyme catalyses (2R)-3-phosphoglycerate + ATP = (2R)-3-phospho-glyceroyl phosphate + ADP. It participates in carbohydrate degradation; glycolysis; pyruvate from D-glyceraldehyde 3-phosphate: step 2/5. In Shewanella piezotolerans (strain WP3 / JCM 13877), this protein is Phosphoglycerate kinase.